We begin with the raw amino-acid sequence, 89 residues long: Small ribosomal subunit protein uS15c (89 aa).

The protein belongs to the universal ribosomal protein uS15 family. In terms of assembly, part of the 30S ribosomal subunit.

The protein resides in the plastid. The protein is Small ribosomal subunit protein uS15c (rps15) of Aneura mirabilis (Parasitic liverwort).